The sequence spans 431 residues: ORC1-type DNA replication protein 14 (431 aa).

ATP contacts are provided by residues 62–66 (TGKSL), Tyr219, and Arg231.

This sequence belongs to the CDC6/cdc18 family.

Functionally, involved in regulation of DNA replication. This chain is ORC1-type DNA replication protein 14 (cdc6n), found in Haloarcula marismortui (strain ATCC 43049 / DSM 3752 / JCM 8966 / VKM B-1809) (Halobacterium marismortui).